The sequence spans 175 residues: Cell division protein SepF (175 aa).

Residues 20–29 (RYEDYDDYDD) are compositionally biased toward acidic residues. A disordered region spans residues 20–88 (RYEDYDDYDD…ERPTPPLRVT (69 aa)). Basic and acidic residues-rich tracts occupy residues 30–47 (AEPHRREPREAVERDLGS) and 54–73 (RRMDARESSPADPAELRRVS).

This sequence belongs to the SepF family. As to quaternary structure, homodimer. Interacts with FtsZ.

The protein localises to the cytoplasm. Its function is as follows. Cell division protein that is part of the divisome complex and is recruited early to the Z-ring. Probably stimulates Z-ring formation, perhaps through the cross-linking of FtsZ protofilaments. Its function overlaps with FtsA. This Acidothermus cellulolyticus (strain ATCC 43068 / DSM 8971 / 11B) protein is Cell division protein SepF.